The following is a 73-amino-acid chain: Putative defensin-like protein 33 (73 aa).

Positions 1–25 (MASNKVSFIFILFLCVLSTAEFGEA) are cleaved as a signal peptide. 3 disulfides stabilise this stretch: cysteine 33–cysteine 59, cysteine 45–cysteine 68, and cysteine 49–cysteine 70.

This sequence belongs to the DEFL family.

The protein localises to the secreted. This chain is Putative defensin-like protein 33, found in Arabidopsis thaliana (Mouse-ear cress).